The sequence spans 589 residues: Chromodomain Y-like protein (589 aa).

Positions 1-10 are enriched in polar residues; sequence MGLGSSQPST. The tract at residues 1–57 is disordered; that stretch reads MGLGSSQPSTKEAEPCTLQEKEEHPVDDTRQQNNAVPATVSDPDQVSPAVQDAETQV. The span at 11-30 shows a compositional bias: basic and acidic residues; the sequence is KEAEPCTLQEKEEHPVDDTR. The 61-residue stretch at 55–115 folds into the Chromo domain; that stretch reads TQVESIVDKR…RHNERQKEGT (61 aa). The tract at residues 55–300 is interaction with EZH2; sequence TQVESIVDKR…TIQTSVTGVT (246 aa). S82 is modified (phosphoserine). The segment at 110 to 155 is disordered; it reads RQKEGTLARANRASPSNARKQISRSTHSALSKTNPKALVVGKDHES. The segment covering 117–128 has biased composition (low complexity); that stretch reads ARANRASPSNAR. K129 is subject to N6,N6,N6-trimethyllysine; by EHMT2; alternate. An N6,N6-dimethyllysine; by EHMT2; alternate modification is found at K129. At K129 the chain carries N6-methyllysine; by EHMT2; alternate. Residues 132–143 show a composition bias toward polar residues; that stretch reads SRSTHSALSKTN. A phosphoserine mark is found at S164, S195, and S210. Residues 202–224 form a disordered region; it reads SIDGFHGESPEKLDQGAEDTVTP. Residues 206–216 are compositionally biased toward basic and acidic residues; sequence FHGESPEKLDQ. The acetyl-CoA-binding domain stretch occupies residues 353-585; the sequence is SENNSLNPEV…DSMLKYLQRK (233 aa).

As to quaternary structure, forms multimers and multimerization is required for stable binding to chromatin. Interacts with HDAC1 and HDAC2 via its C-terminal acetyl-CoA-binding domain. Interacts with EZH2, EED, SUZ12, REST, EHMT1 and EHMT2. Part of a complex containing at least CDYL, REST, WIZ, SETB1, EHMT1 and EHMT2. Part of a complex containing at least CDYL, MIER1, MIER2, HDAC1 and HDAC2. Interacts with CHAF1A and CHAF1B; bridging the CAF-1 complex to the MCM2-7 (MCM) complex. Interacts with MCM3 and MCM5; bridging the CAF-1 complex to the MCM2-7 (MCM) complex. Recruited to Xist RNA-coated X chromosome. Interacts with EHMT2 and PRDM9; interaction only takes place when PRDM9 is bound to hotspot DNA. As to expression, expressed in the brain, with expression in the hippocampal dentate gyrus, CA1, striatum and cortex (at protein level). Expressed in the prelimbic cortex.

It localises to the nucleus. The protein resides in the chromosome. It carries out the reaction 3-hydroxybutanoyl-CoA = (2E)-butenoyl-CoA + H2O. Chromatin reader protein that recognizes and binds histone H3 trimethylated at 'Lys-9', dimethylated at 'Lys-27' and trimethylated at 'Lys-27' (H3K9me3, H3K27me2 and H3K27me3, respectively). Part of multimeric repressive chromatin complexes, where it is required for transmission and restoration of repressive histone marks, thereby preserving the epigenetic landscape. Required for chromatin targeting and maximal enzymatic activity of Polycomb repressive complex 2 (PRC2); acts as a positive regulator of PRC2 activity by bridging the pre-existing histone H3K27me3 and newly recruited PRC2 on neighboring nucleosomes. Acts as a corepressor for REST by facilitating histone-lysine N-methyltransferase EHMT2 recruitment and H3K9 dimethylation at REST target genes for repression. Involved in X chromosome inactivation in females: recruited to Xist RNA-coated X chromosome and facilitates propagation of H3K9me2 by anchoring EHMT2. Promotes EZH2 accumulation and H3K27me3 methylation at DNA double strand breaks (DSBs), thereby facilitating transcriptional repression at sites of DNA damage and homology-directed repair of DSBs. Required for neuronal migration during brain development by repressing expression of RHOA. By repressing the expression of SCN8A, contributes to the inhibition of intrinsic neuronal excitability and epileptogenesis. In addition to acting as a chromatin reader, acts as a hydro-lyase. Shows crotonyl-coA hydratase activity by mediating the conversion of crotonyl-CoA ((2E)-butenoyl-CoA) to beta-hydroxybutyryl-CoA (3-hydroxybutanoyl-CoA), thereby acting as a negative regulator of histone crotonylation. Histone crotonylation is required during spermatogenesis; down-regulation of histone crotonylation by CDYL regulates the reactivation of sex chromosome-linked genes in round spermatids and histone replacement in elongating spermatids. By regulating histone crotonylation and trimethylation of H3K27, may be involved in stress-induced depression-like behaviors, possibly by regulating VGF expression. Displays acetyltransferase activity toward tubulin in vitro; such activity is however unsure in vivo and additional evidences would be required to confirm this result. Functionally, not able to recognize and bind histone H3K9me3, histone H3K27me2 and histone H3K27me3, due to the presence of a N-terminal extension that inactivates the chromo domain. The chain is Chromodomain Y-like protein from Rattus norvegicus (Rat).